The primary structure comprises 185 residues: Photosystem I assembly protein Ycf4 (185 aa).

Transmembrane regions (helical) follow at residues Asn-21–Tyr-43 and Gly-63–Leu-85.

Belongs to the Ycf4 family.

The protein resides in the plastid. It localises to the chloroplast thylakoid membrane. Seems to be required for the assembly of the photosystem I complex. The protein is Photosystem I assembly protein Ycf4 of Aegilops crassa (Persian goatgrass).